We begin with the raw amino-acid sequence, 189 residues long: Protein GrpE (189 aa).

Positions 1-22 are disordered; the sequence is MKEQQKETEQNIEEINDETVTE. Residues 10–22 are compositionally biased toward acidic residues; sequence QNIEEINDETVTE.

This sequence belongs to the GrpE family. Homodimer.

The protein resides in the cytoplasm. In terms of biological role, participates actively in the response to hyperosmotic and heat shock by preventing the aggregation of stress-denatured proteins, in association with DnaK and GrpE. It is the nucleotide exchange factor for DnaK and may function as a thermosensor. Unfolded proteins bind initially to DnaJ; upon interaction with the DnaJ-bound protein, DnaK hydrolyzes its bound ATP, resulting in the formation of a stable complex. GrpE releases ADP from DnaK; ATP binding to DnaK triggers the release of the substrate protein, thus completing the reaction cycle. Several rounds of ATP-dependent interactions between DnaJ, DnaK and GrpE are required for fully efficient folding. The polypeptide is Protein GrpE (Leuconostoc citreum (strain KM20)).